Consider the following 64-residue polypeptide: Large ribosomal subunit protein bL33c (64 aa).

Belongs to the bacterial ribosomal protein bL33 family.

It localises to the plastid. Its subcellular location is the chloroplast. This is Large ribosomal subunit protein bL33c (rpl33) from Cyanidium caldarium (Red alga).